The following is a 140-amino-acid chain: Large ribosomal subunit protein uL14 (140 aa).

Belongs to the universal ribosomal protein uL14 family.

The protein is Large ribosomal subunit protein uL14 (rpl-23) of Caenorhabditis elegans.